Consider the following 421-residue polypeptide: Mitochondrial distribution and morphology protein 10 (421 aa).

This sequence belongs to the MDM10 family. In terms of assembly, component of the ER-mitochondria encounter structure (ERMES) or MDM complex, composed of MMM1, MDM10, MDM12 and MDM34. Associates with the mitochondrial outer membrane sorting assembly machinery SAM(core) complex.

Its subcellular location is the mitochondrion outer membrane. Functionally, component of the ERMES/MDM complex, which serves as a molecular tether to connect the endoplasmic reticulum and mitochondria. Components of this complex are involved in the control of mitochondrial shape and protein biogenesis and may function in phospholipid exchange. MDM10 is involved in the late assembly steps of the general translocase of the mitochondrial outer membrane (TOM complex). Functions in the TOM40-specific route of the assembly of outer membrane beta-barrel proteins, including the association of TOM40 with the receptor TOM22 and small TOM proteins. Can associate with the SAM(core) complex as well as the MDM12-MMM1 complex, both involved in late steps of the major beta-barrel assembly pathway, that is responsible for biogenesis of all outer membrane beta-barrel proteins. May act as a switch that shuttles between both complexes and channels precursor proteins into the TOM40-specific pathway. Plays a role in mitochondrial morphology and in the inheritance of mitochondria. The protein is Mitochondrial distribution and morphology protein 10 of Vanderwaltozyma polyspora (strain ATCC 22028 / DSM 70294 / BCRC 21397 / CBS 2163 / NBRC 10782 / NRRL Y-8283 / UCD 57-17) (Kluyveromyces polysporus).